A 269-amino-acid polypeptide reads, in one-letter code: Integral membrane protein 2C (269 aa).

Phosphothreonine is present on Thr-39. The chain crosses the membrane as a helical; Signal-anchor for type II membrane protein span at residues 57–77 (VGGVCYLSMGMVVLLMGLVFA). The 95-residue stretch at 138-232 (FGGGDPADII…LCNGKDTYRL (95 aa)) folds into the BRICHOS domain. Cys-165 and Cys-224 form a disulfide bridge. Asn-171 is a glycosylation site (N-linked (GlcNAc...) asparagine).

It belongs to the ITM2 family. In terms of assembly, interacts with BACE1. Interacts with APP. Interacts with STMN2. Post-translationally, type I membrane-bound, as well as soluble, furin has a pre-eminent role in ITM2C proteolytic processing. PCSK7 and PCSK5 may also be involved although to a lesser extent. The soluble form of PCSK7 is incapable of processing ITM2C. Fails to undergo shedding by ADAM10 and intramembrane cleavage by SPPL2B.

The protein resides in the lysosome membrane. The protein localises to the cell membrane. Negative regulator of amyloid-beta peptide production. May inhibit the processing of APP by blocking its access to alpha- and beta-secretase. Binding to the beta-secretase-cleaved APP C-terminal fragment is negligible, suggesting that ITM2C is a poor gamma-secretase cleavage inhibitor. May play a role in TNF-induced cell death and neuronal differentiation. The protein is Integral membrane protein 2C (Itm2c) of Mus musculus (Mouse).